Reading from the N-terminus, the 417-residue chain is Argininosuccinate synthase (417 aa).

8 to 16 (AYSGGLDTS) serves as a coordination point for ATP. Tyrosine 87 is an L-citrulline binding site. Glycine 117 is a binding site for ATP. Residues threonine 119, asparagine 123, and aspartate 124 each contribute to the L-aspartate site. Asparagine 123 contributes to the L-citrulline binding site. Positions 127, 175, 259, and 271 each coordinate L-citrulline.

Belongs to the argininosuccinate synthase family. Type 1 subfamily. Homotetramer.

It is found in the cytoplasm. The enzyme catalyses L-citrulline + L-aspartate + ATP = 2-(N(omega)-L-arginino)succinate + AMP + diphosphate + H(+). The protein operates within amino-acid biosynthesis; L-arginine biosynthesis; L-arginine from L-ornithine and carbamoyl phosphate: step 2/3. This chain is Argininosuccinate synthase, found in Clavibacter sepedonicus (Clavibacter michiganensis subsp. sepedonicus).